The following is a 248-amino-acid chain: Transcription termination/antitermination protein NusG (248 aa).

The 31-residue stretch at 197-227 (KGDQVRVIEGPFMNFTGTVEEVHPEKRKLTV) folds into the KOW domain.

This sequence belongs to the NusG family. As to quaternary structure, monomer. Homodimer.

Participates in transcription elongation, termination and antitermination. The chain is Transcription termination/antitermination protein NusG from Aquifex aeolicus (strain VF5).